The sequence spans 165 residues: Interferon gamma (165 aa).

Positions 1 to 23 are cleaved as a signal peptide; that stretch reads MKYTSYILAFQLCIVLGSLGCYC. Gln-24 carries the post-translational modification Pyrrolidone carboxylic acid. N-linked (GlcNAc...) asparagine glycosylation is found at Asn-48 and Asn-120.

The protein belongs to the type II (or gamma) interferon family. Homodimer. Interacts with IFNGR1 (via extracellular domain); this interaction promotes IFNGR1 dimerization.

It localises to the secreted. In terms of biological role, type II interferon produced by immune cells such as T-cells and NK cells that plays crucial roles in antimicrobial, antiviral, and antitumor responses by activating effector immune cells and enhancing antigen presentation. Primarily signals through the JAK-STAT pathway after interaction with its receptor IFNGR1 to affect gene regulation. Upon IFNG binding, IFNGR1 intracellular domain opens out to allow association of downstream signaling components JAK2, JAK1 and STAT1, leading to STAT1 activation, nuclear translocation and transcription of IFNG-regulated genes. Many of the induced genes are transcription factors such as IRF1 that are able to further drive regulation of a next wave of transcription. Plays a role in class I antigen presentation pathway by inducing a replacement of catalytic proteasome subunits with immunoproteasome subunits. In turn, increases the quantity, quality, and repertoire of peptides for class I MHC loading. Increases the efficiency of peptide generation also by inducing the expression of activator PA28 that associates with the proteasome and alters its proteolytic cleavage preference. Up-regulates as well MHC II complexes on the cell surface by promoting expression of several key molecules such as cathepsins B/CTSB, H/CTSH, and L/CTSL. Participates in the regulation of hematopoietic stem cells during development and under homeostatic conditions by affecting their development, quiescence, and differentiation. The protein is Interferon gamma (IFNG) of Papio anubis (Olive baboon).